We begin with the raw amino-acid sequence, 212 residues long: Protein FAM177A1 (212 aa).

N-acetylmethionine is present on methionine 1. Positions 1 to 11 (MEGEPASREEG) are enriched in basic and acidic residues. The segment at 1-33 (MEGEPASREEGEAVNASGAAAASAFRESAQQMS) is disordered. The span at 13-29 (AVNASGAAAASAFRESA) shows a compositional bias: low complexity. Residue serine 69 is modified to Phosphoserine. Residue threonine 70 is modified to Phosphothreonine. The stretch at 135–172 (IDEYYRMKKEEEEEEEENRMSEEAERQYQQNKLQADSV) forms a coiled coil. Positions 146-179 (EEEEEENRMSEEAERQYQQNKLQADSVVQSDQPE) are disordered. The segment covering 161–179 (QYQQNKLQADSVVQSDQPE) has biased composition (polar residues).

The protein belongs to the FAM177 family.

The protein is Protein FAM177A1 (FAM177A1) of Bos taurus (Bovine).